A 3187-amino-acid chain; its full sequence is Cilia- and flagella-associated protein 47 (3187 aa).

The 124-residue stretch at 1746 to 1869 folds into the Calponin-homology (CH) domain; the sequence is SDSERILLSW…LCVYMYERLP (124 aa). The tract at residues 2024 to 2052 is disordered; it reads KLTESRQYPKHDDDMSSSGSDTDQGCSDS. A compositionally biased stretch (basic and acidic residues) spans 2026 to 2037; the sequence is TESRQYPKHDDD.

As to quaternary structure, interacts with CFAP65. In terms of tissue distribution, highly expressed in spermatzoa (at protein level).

It is found in the cytoplasm. It localises to the cytoskeleton. The protein resides in the flagellum basal body. Functionally, plays a role in flagellar formation and sperm motility. The sequence is that of Cilia- and flagella-associated protein 47 from Homo sapiens (Human).